Consider the following 1476-residue polypeptide: ABC transporter G family member 17 (1476 aa).

Disordered regions lie at residues 13 to 45 (SENNNNNNNNNNNNNNNNNNNLNNNNDNDYDYD) and 68 to 91 (FREIDGGKNNNNHDIELGERKPEN). The stretch at 14 to 67 (ENNNNNNNNNNNNNNNNNNNLNNNNDNDYDYDSINNIEEKFENVSKELEGQSIK) forms a coiled coil. Positions 15 to 39 (NNNNNNNNNNNNNNNNNNNLNNNND) are enriched in low complexity. Positions 151 to 402 (LNPFNYFKKD…FLDLGFDCEP (252 aa)) constitute an ABC transporter 1 domain. Positions 507–751 (WGDKFTLTSR…SLSVKGENYL (245 aa)) constitute an ABC transmembrane type-2 1 domain. 5 helical membrane passes run 517–537 (FLTILVLSFIFGGIYFQQPLT), 547–567 (AIFTSIIFNCILTQGELHGAL), 592–612 (ILIDIPFILVQVFLHSFIVYF), 623–643 (FFIFCFTLVGVSLSSASLFRG), and 764–784 (LNVVVIFLFWLFYIGLNLFAV). The ABC transporter 2 domain occupies 838 to 1082 (FSWKSISYTV…LTSYFERHGV (245 aa)). 874-881 (GSSGAGKT) provides a ligand contact to ATP. 6 helical membrane-spanning segments follow: residues 1182-1202 (FYTMGSFAQSAVSGLVIGFTF), 1219-1239 (SWEAMILGVLLIYLVLPMFFI), 1260-1280 (LSMIAVEIPYVVLSSTLFFIA), 1298-1318 (WLMHTMFSVYIVSFAQALGAA), 1322-1342 (IAISIAALPIVLFYLFLLCGV), and 1450-1470 (FGIIVAYWGSSILAVLFFVYL). The 224-residue stretch at 1182-1405 (FYTMGSFAQS…TDCQTYSAPF (224 aa)) folds into the ABC transmembrane type-2 2 domain.

This sequence belongs to the ABC transporter superfamily. ABCG family. PDR (TC 3.A.1.205) subfamily.

It localises to the membrane. The sequence is that of ABC transporter G family member 17 (abcG17-1) from Dictyostelium discoideum (Social amoeba).